The primary structure comprises 198 residues: NAD(P)H dehydrogenase (quinone) (198 aa).

Residues 4-189 form the Flavodoxin-like domain; sequence VLVLYYSMYG…SIARYQGEYV (186 aa). FMN is bound by residues 10–15 and 78–80; these read SMYGHI and TRF. Tyr-12 is a binding site for NAD(+). Trp-98 lines the substrate pocket. Residues 113–118 and His-133 each bind FMN; that span reads STGTGG.

It belongs to the WrbA family. It depends on FMN as a cofactor.

The catalysed reaction is a quinone + NADH + H(+) = a quinol + NAD(+). It catalyses the reaction a quinone + NADPH + H(+) = a quinol + NADP(+). This Escherichia fergusonii (strain ATCC 35469 / DSM 13698 / CCUG 18766 / IAM 14443 / JCM 21226 / LMG 7866 / NBRC 102419 / NCTC 12128 / CDC 0568-73) protein is NAD(P)H dehydrogenase (quinone).